The chain runs to 550 residues: CTP synthase (550 aa).

Positions 1–271 (MTRYIFITGG…DAEVLDVFGM (271 aa)) are amidoligase domain. A CTP-binding site is contributed by Ser13. Ser13 serves as a coordination point for UTP. 14 to 19 (SLGKGL) provides a ligand contact to ATP. Tyr54 contacts L-glutamine. Asp71 contributes to the ATP binding site. Asp71 and Glu145 together coordinate Mg(2+). Residues 152-154 (DIE), 192-197 (KTKPTQ), and Lys228 each bind CTP. UTP-binding positions include 192–197 (KTKPTQ) and Lys228. One can recognise a Glutamine amidotransferase type-1 domain in the interval 297–549 (TIAVVGKYTV…IAAAKEHGRL (253 aa)). Residue Gly361 coordinates L-glutamine. Cys388 acts as the Nucleophile; for glutamine hydrolysis in catalysis. Residues 389 to 392 (FGMQ), Glu412, and Arg477 contribute to the L-glutamine site. Catalysis depends on residues His522 and Glu524.

This sequence belongs to the CTP synthase family. In terms of assembly, homotetramer.

It catalyses the reaction UTP + L-glutamine + ATP + H2O = CTP + L-glutamate + ADP + phosphate + 2 H(+). The enzyme catalyses L-glutamine + H2O = L-glutamate + NH4(+). It carries out the reaction UTP + NH4(+) + ATP = CTP + ADP + phosphate + 2 H(+). The protein operates within pyrimidine metabolism; CTP biosynthesis via de novo pathway; CTP from UDP: step 2/2. Its activity is regulated as follows. Allosterically activated by GTP, when glutamine is the substrate; GTP has no effect on the reaction when ammonia is the substrate. The allosteric effector GTP functions by stabilizing the protein conformation that binds the tetrahedral intermediate(s) formed during glutamine hydrolysis. Inhibited by the product CTP, via allosteric rather than competitive inhibition. In terms of biological role, catalyzes the ATP-dependent amination of UTP to CTP with either L-glutamine or ammonia as the source of nitrogen. Regulates intracellular CTP levels through interactions with the four ribonucleotide triphosphates. The polypeptide is CTP synthase (Caulobacter vibrioides (strain ATCC 19089 / CIP 103742 / CB 15) (Caulobacter crescentus)).